The sequence spans 159 residues: Ribosomal RNA large subunit methyltransferase H (159 aa).

Residues leucine 76, glycine 108, and phenylalanine 127 to phenylalanine 132 each bind S-adenosyl-L-methionine.

It belongs to the RNA methyltransferase RlmH family. Homodimer.

It localises to the cytoplasm. The catalysed reaction is pseudouridine(1915) in 23S rRNA + S-adenosyl-L-methionine = N(3)-methylpseudouridine(1915) in 23S rRNA + S-adenosyl-L-homocysteine + H(+). Specifically methylates the pseudouridine at position 1915 (m3Psi1915) in 23S rRNA. The chain is Ribosomal RNA large subunit methyltransferase H from Clostridium botulinum (strain 657 / Type Ba4).